The sequence spans 267 residues: tRNA-cytidine(32) 2-sulfurtransferase 1 (267 aa).

A PP-loop motif motif is present at residues 42-47 (SGGKDS). [4Fe-4S] cluster-binding residues include Cys117, Cys120, and Cys208.

It belongs to the TtcA family. Homodimer. It depends on Mg(2+) as a cofactor. The cofactor is [4Fe-4S] cluster.

The protein localises to the cytoplasm. The enzyme catalyses cytidine(32) in tRNA + S-sulfanyl-L-cysteinyl-[cysteine desulfurase] + AH2 + ATP = 2-thiocytidine(32) in tRNA + L-cysteinyl-[cysteine desulfurase] + A + AMP + diphosphate + H(+). Its pathway is tRNA modification. Its function is as follows. Catalyzes the ATP-dependent 2-thiolation of cytidine in position 32 of tRNA, to form 2-thiocytidine (s(2)C32). The sulfur atoms are provided by the cysteine/cysteine desulfurase (IscS) system. This is tRNA-cytidine(32) 2-sulfurtransferase 1 from Francisella tularensis subsp. novicida (strain U112).